The sequence spans 279 residues: UTP--glucose-1-phosphate uridylyltransferase (279 aa).

It belongs to the UDPGP type 2 family.

It catalyses the reaction alpha-D-glucose 1-phosphate + UTP + H(+) = UDP-alpha-D-glucose + diphosphate. May play a role in stationary phase survival. This chain is UTP--glucose-1-phosphate uridylyltransferase (galU), found in Pseudomonas aeruginosa.